Reading from the N-terminus, the 302-residue chain is Phosphatidylglycerol--prolipoprotein diacylglyceryl transferase (302 aa).

Transmembrane regions (helical) follow at residues 19 to 39 (FGPLALRWYALAYVAGILLGW), 67 to 87 (LVLWITLGIIVGGRLGYFVFY), 108 to 128 (IWEGGMSFHGGFLGVCAAIIL), 143 to 163 (LIAPVAPIGIFFGRIANFING), 203 to 223 (QLYEAALEGLVLFLILAFAIY), 232 to 252 (GALVATFLLGYGLARLALENV), and 264 to 284 (LGLTMGMMLSIPMILAGGWLL). Arg156 is a binding site for a 1,2-diacyl-sn-glycero-3-phospho-(1'-sn-glycerol).

This sequence belongs to the Lgt family.

The protein resides in the cell inner membrane. The catalysed reaction is L-cysteinyl-[prolipoprotein] + a 1,2-diacyl-sn-glycero-3-phospho-(1'-sn-glycerol) = an S-1,2-diacyl-sn-glyceryl-L-cysteinyl-[prolipoprotein] + sn-glycerol 1-phosphate + H(+). The protein operates within protein modification; lipoprotein biosynthesis (diacylglyceryl transfer). Catalyzes the transfer of the diacylglyceryl group from phosphatidylglycerol to the sulfhydryl group of the N-terminal cysteine of a prolipoprotein, the first step in the formation of mature lipoproteins. This is Phosphatidylglycerol--prolipoprotein diacylglyceryl transferase from Caulobacter vibrioides (strain ATCC 19089 / CIP 103742 / CB 15) (Caulobacter crescentus).